The chain runs to 256 residues: 5-keto-4-deoxy-D-glucarate aldolase (256 aa).

H50 functions as the Proton acceptor in the catalytic mechanism. Residue Q151 coordinates substrate. Position 153 (E153) interacts with Mg(2+). Residues S178 and D179 each coordinate substrate. D179 contacts Mg(2+).

It belongs to the HpcH/HpaI aldolase family. KDGluc aldolase subfamily. In terms of assembly, homohexamer; trimer of dimers. Mg(2+) serves as cofactor.

The catalysed reaction is 5-dehydro-4-deoxy-D-glucarate = 2-hydroxy-3-oxopropanoate + pyruvate. It carries out the reaction 2-dehydro-3-deoxy-D-glucarate = 2-hydroxy-3-oxopropanoate + pyruvate. It participates in carbohydrate acid metabolism; galactarate degradation; D-glycerate from galactarate: step 2/3. Its function is as follows. Catalyzes the reversible retro-aldol cleavage of both 5-keto-4-deoxy-D-glucarate and 2-keto-3-deoxy-D-glucarate to pyruvate and tartronic semialdehyde. This Shigella boydii serotype 4 (strain Sb227) protein is 5-keto-4-deoxy-D-glucarate aldolase.